The following is a 91-amino-acid chain: Small integral membrane protein 12-B (91 aa).

Residues 12–34 form a helical membrane-spanning segment; the sequence is YAPYITFPVAFVVGAVGYQLEWF.

This sequence belongs to the SMIM12 family.

The protein localises to the membrane. The polypeptide is Small integral membrane protein 12-B (smim12-b) (Xenopus laevis (African clawed frog)).